The chain runs to 304 residues: Uricase (304 aa).

The residue at position 2 (alanine 2) is an N-acetylalanine. Residues lysine 10 and lysine 23 each carry the N6-acetyllysine; alternate modification. Lysine 10 and lysine 23 each carry N6-succinyllysine; alternate. Catalysis depends on lysine 23, which acts as the Charge relay system. Residues lysine 27 and lysine 36 each carry the N6-acetyllysine modification. A phosphoserine mark is found at serine 39 and serine 63. Threonine 68 acts as the Charge relay system in catalysis. Positions 68 and 69 each coordinate urate. Lysine 118, lysine 122, and lysine 164 each carry N6-acetyllysine. Phenylalanine 170 is a binding site for urate. 2 positions are modified to N6-acetyllysine: lysine 175 and lysine 185. Arginine 187 is a binding site for urate. N6-acetyllysine; alternate occurs at positions 221 and 228. Lysine 221 and lysine 228 each carry N6-succinyllysine; alternate. At serine 232 the chain carries Phosphoserine. Residues valine 235, glutamine 236, and asparagine 262 each contribute to the urate site. The active-site Charge relay system is histidine 264. At lysine 278 the chain carries N6-acetyllysine. Residue tyrosine 289 is modified to Phosphotyrosine. Residues 302-304 (SKL) carry the Microbody targeting signal motif.

This sequence belongs to the uricase family.

Its subcellular location is the peroxisome. It carries out the reaction urate + O2 + H2O = 5-hydroxyisourate + H2O2. It participates in purine metabolism; urate degradation; (S)-allantoin from urate: step 1/3. In terms of biological role, catalyzes the oxidation of uric acid to 5-hydroxyisourate, which is further processed to form (S)-allantoin. This chain is Uricase (UOX), found in Canis lupus familiaris (Dog).